The chain runs to 111 residues: Large ribosomal subunit protein P2-2 (111 aa).

The segment at 86–111 is disordered; sequence APAAAAAKKDEPEEEADDDMGFGLFD.

This sequence belongs to the eukaryotic ribosomal protein P1/P2 family. As to quaternary structure, P1 and P2 exist as dimers at the large ribosomal subunit. Phosphorylated.

In terms of biological role, plays an important role in the elongation step of protein synthesis. This chain is Large ribosomal subunit protein P2-2 (LIP'), found in Leishmania infantum.